The following is a 105-amino-acid chain: Met repressor (105 aa).

It belongs to the MetJ family. In terms of assembly, homodimer.

The protein localises to the cytoplasm. Its function is as follows. This regulatory protein, when combined with SAM (S-adenosylmethionine) represses the expression of the methionine regulon and of enzymes involved in SAM synthesis. The polypeptide is Met repressor (Proteus mirabilis (strain HI4320)).